Consider the following 580-residue polypeptide: Putative ankyrin repeat protein L63 (580 aa).

14 ANK repeats span residues 81–110, 111–140, 141–170, 172–200, 202–230, 314–339, 340–369, 370–399, 400–429, 431–459, 461–489, 490–519, 521–549, and 551–579; these read SLNRHFKMSCEKGQYTIVTYLVALGADFRI, DNDYGLIHAAKNGHIGVVKYLVSKGVNIGA, NDNCAIKFASENGHLEVVEYLVSKGADINA, NNYPIEMASKNGHLKVVEYLVSLGVDIRA, DDYVVGLAYYYDHHEVVDYLVSQGAVLNK, SLDDYLVKSCCEGDLSIIKDLILLGA, SERKAVMLACQNGHLEIIRYFVSQGFNIKC, GSNCAVTIASENGHIEVVRYLISLGADINS, GNNYAIKYASENGHLEVVKYLVDQGANIRA, NDRAVRFASRKGHLEVVKYLVSKGANIRA, DDRAVTLASQNGHLEVVKYLVSQGTDIKA, GDDYAVRWASRNGHLEVVKYLISQGANIKA, DDYAVRWASLNGHLEVVKFLVNQNADIRA, and NNYAVRWAHKNKHFDVVEYLISQGAVINP.

The protein is Putative ankyrin repeat protein L63 of Acanthamoeba polyphaga (Amoeba).